We begin with the raw amino-acid sequence, 229 residues long: MYDIKKWKHVFKLDPAKTISDEDLDKICMSETDAIIIGGTDNVTEDNVIQLMSRVRRYPLPLVLEISNLESTMPGFDFYFAPMVLNSRDVTYHNGILLEALKEYGHMMDFDEVIFQGYVVLNPDSKVAEKTQANTDIDTQDIEAYALMTDKVYRFPIMYIEYSGTFGDMEKVRAAKDNLEEAHIFYGGGISSISDAKAAAGVADTIVVGNLVYNDIKQALKTVKIKGKS.

Lys-12 lines the sn-glycerol 1-phosphate pocket. Mg(2+) is bound by residues Asp-14 and Thr-40. Residues 159 to 164 (YIEYSG), Gly-189, and 209 to 210 (GN) each bind sn-glycerol 1-phosphate.

This sequence belongs to the GGGP/HepGP synthase family. Group I subfamily. In terms of assembly, homodimer. Mg(2+) serves as cofactor.

It catalyses the reaction sn-glycerol 1-phosphate + all-trans-heptaprenyl diphosphate = 3-heptaprenyl-sn-glycero-1-phosphate + diphosphate. The protein operates within membrane lipid metabolism; glycerophospholipid metabolism. Functionally, prenyltransferase that catalyzes in vivo the transfer of the heptaprenyl moiety of heptaprenyl pyrophosphate (HepPP; 35 carbon atoms) to the C3 hydroxyl of sn-glycerol-1-phosphate (G1P), producing heptaprenylglyceryl phosphate (HepGP). This reaction is an ether-bond-formation step in the biosynthesis of archaea-type G1P-based membrane lipids found in Bacillales. The sequence is that of Heptaprenylglyceryl phosphate synthase from Staphylococcus carnosus (strain TM300).